A 346-amino-acid chain; its full sequence is NADPH dehydrogenase (346 aa).

23 to 26 (SPMC) contributes to the FMN binding site. Tyr-28 is a substrate binding site. FMN-binding residues include Ala-60 and Gln-102. Residue 164-167 (HGAH) coordinates substrate. Residues Arg-215 and 307-308 (GR) contribute to the FMN site.

This sequence belongs to the NADH:flavin oxidoreductase/NADH oxidase family. NamA subfamily. Homotetramer. Requires FMN as cofactor.

It catalyses the reaction A + NADPH + H(+) = AH2 + NADP(+). Its function is as follows. Catalyzes the reduction of the double bond of an array of alpha,beta-unsaturated aldehydes and ketones. It also reduces the nitro group of nitroester and nitroaromatic compounds. It could have a role in detoxification processes. In Bacillus cytotoxicus (strain DSM 22905 / CIP 110041 / 391-98 / NVH 391-98), this protein is NADPH dehydrogenase.